The chain runs to 790 residues: Protein SEY1 (790 aa).

Topologically, residues 1–692 (MELSEGELSH…KRSIVQHITQ (692 aa)) are cytoplasmic. Residues 55-284 (GNNYHIISVF…VSNELFKPEY (230 aa)) enclose the GB1/RHD3-type G domain. 65-72 (GSQSTGKS) is a GTP binding site. Residues 693 to 713 (IPYYIYLIILVLGWNEFMAII) traverse the membrane as a helical segment. Over 714–716 (RNP) the chain is Lumenal. A helical membrane pass occupies residues 717 to 737 (LFFSLSIVLGATVYVLYYLGL). At 738 to 790 (LRPALVVAQRTMDEVIVMAKTKLREVLIDDHEVTGRQLNKMAGSKENIELDDM) the chain is on the cytoplasmic side.

Belongs to the TRAFAC class dynamin-like GTPase superfamily. GB1/RHD3 GTPase family. RHD3 subfamily.

Its subcellular location is the endoplasmic reticulum membrane. Its function is as follows. Cooperates with the reticulon proteins and tubule-shaping DP1 family proteins to generate and maintain the structure of the tubular endoplasmic reticulum network. Has GTPase activity, which is required for its function in ER organization. The protein is Protein SEY1 of Candida albicans (strain WO-1) (Yeast).